The primary structure comprises 220 residues: Ribonuclease HII (220 aa).

Residues 1-210 enclose the RNase H type-2 domain; that stretch reads MKVAGVDEAG…ARKIEERFRK (210 aa). The a divalent metal cation site is built by Asp7, Glu8, and Asp105.

It belongs to the RNase HII family. Mn(2+) serves as cofactor. Requires Mg(2+) as cofactor.

The protein localises to the cytoplasm. The enzyme catalyses Endonucleolytic cleavage to 5'-phosphomonoester.. Functionally, endonuclease that specifically degrades the RNA of RNA-DNA hybrids. This chain is Ribonuclease HII (rnhB), found in Pyrococcus horikoshii (strain ATCC 700860 / DSM 12428 / JCM 9974 / NBRC 100139 / OT-3).